The primary structure comprises 185 residues: Ribosome-recycling factor (185 aa).

Belongs to the RRF family.

The protein localises to the cytoplasm. Its function is as follows. Responsible for the release of ribosomes from messenger RNA at the termination of protein biosynthesis. May increase the efficiency of translation by recycling ribosomes from one round of translation to another. The chain is Ribosome-recycling factor from Corynebacterium kroppenstedtii (strain DSM 44385 / JCM 11950 / CIP 105744 / CCUG 35717).